The primary structure comprises 882 residues: DNA mismatch repair protein MutS (882 aa).

627–634 contacts ATP; that stretch reads GPNMAGKS.

The protein belongs to the DNA mismatch repair MutS family.

This protein is involved in the repair of mismatches in DNA. It is possible that it carries out the mismatch recognition step. This protein has a weak ATPase activity. The sequence is that of DNA mismatch repair protein MutS from Anaeromyxobacter dehalogenans (strain 2CP-C).